The sequence spans 281 residues: Bis(5'-nucleosyl)-tetraphosphatase, symmetrical (281 aa).

This sequence belongs to the Ap4A hydrolase family.

It catalyses the reaction P(1),P(4)-bis(5'-adenosyl) tetraphosphate + H2O = 2 ADP + 2 H(+). Functionally, hydrolyzes diadenosine 5',5'''-P1,P4-tetraphosphate to yield ADP. This is Bis(5'-nucleosyl)-tetraphosphatase, symmetrical from Delftia acidovorans (strain DSM 14801 / SPH-1).